We begin with the raw amino-acid sequence, 144 residues long: Large ribosomal subunit protein uL15 (144 aa).

Positions 1–56 (MELNTLAPAPGAKSSKKRVGRGIGSGLGKTGGRGHKGQKSRSGGSVKPGFEGGQMP) are disordered. The segment covering 21–31 (RGIGSGLGKTG) has biased composition (gly residues).

It belongs to the universal ribosomal protein uL15 family. As to quaternary structure, part of the 50S ribosomal subunit.

In terms of biological role, binds to the 23S rRNA. In Idiomarina loihiensis (strain ATCC BAA-735 / DSM 15497 / L2-TR), this protein is Large ribosomal subunit protein uL15.